Here is a 727-residue protein sequence, read N- to C-terminus: Two-component response regulator-like APRR7 (727 aa).

The tract at residues 1–47 (MNANEEGEGSRYPITDRKTGETKFDRVESRTEKHSEEEKTNGITMDV) is disordered. Positions 14–40 (ITDRKTGETKFDRVESRTEKHSEEEKT) are enriched in basic and acidic residues. Positions 79 to 197 (RVLLVENDDC…ELKILWQHVW (119 aa)) constitute a Response regulatory domain. Disordered regions lie at residues 203 to 265 (SSGS…KKAV), 291 to 312 (NPEFPSNQLVAPPAEKETQEHD), 339 to 416 (KDEP…KTLD), 464 to 487 (SRYNPASNANKISGGNLGSTSLQD), 509 to 560 (ESLP…QPLP), and 606 to 670 (VNGS…SQRE). Residues 246 to 259 (ASDGSSDGSGAQSS) are compositionally biased toward low complexity. 3 stretches are compositionally biased toward polar residues: residues 344 to 353 (SKTTGIMRQD), 467 to 487 (NPASNANKISGGNLGSTSLQD), and 519 to 535 (VGSNNFDMSSTTENNAF). Residues 538 to 555 (PGAPKVSSAGSSSVKHSS) are compositionally biased toward low complexity. Gly residues predominate over residues 641-657 (GKNGNGDGSGSGSGSGS). Positions 669 to 711 (REAALTKFRQKRKERCFRKKVRYQSRKKLAEQRPRVRGQFVRK) constitute a CCT domain.

The protein belongs to the ARR-like family. Phosphorylated. Phosphorylation varies throughout the diurnal cycle.

It localises to the nucleus. Its function is as follows. Transcriptional repressor of CCA1 and LHY, and positive regulator of LWD1 and LWD2 expression. Represses the expression of other clock proteins and master regulators of plant growth, development and response to abiotic stress. Involved in the positive and negative feedback loops of the circadian clock. Controls photoperiodic flowering response and temperature compensation. Expression of several members of the ARR-like family is controlled by circadian rhythm. APRR9, APRR7, and APRR5 coordinately act on the upstream region of the target genes to repress their expression from noon until midnight. The particular coordinated sequential expression of APRR9, APRR7, APRR5, APRR3 and APPR1 result to circadian waves that may be at the basis of the endogenous circadian clock. This is Two-component response regulator-like APRR7 (APRR7) from Arabidopsis thaliana (Mouse-ear cress).